An 85-amino-acid chain; its full sequence is Small ribosomal subunit protein uS17 (85 aa).

The protein belongs to the universal ribosomal protein uS17 family. In terms of assembly, part of the 30S ribosomal subunit.

Functionally, one of the primary rRNA binding proteins, it binds specifically to the 5'-end of 16S ribosomal RNA. The protein is Small ribosomal subunit protein uS17 of Mycoplasma genitalium (strain ATCC 33530 / DSM 19775 / NCTC 10195 / G37) (Mycoplasmoides genitalium).